A 706-amino-acid chain; its full sequence is Glutamine-dependent NAD(+) synthetase (706 aa).

The region spanning 5 to 275 (VTVATCALNQ…VEVLTATLDL (271 aa)) is the CN hydrolase domain. Glu45 acts as the Proton acceptor; for glutaminase activity in catalysis. Catalysis depends on Lys114, which acts as the For glutaminase activity. Cys175 functions as the Nucleophile; for glutaminase activity in the catalytic mechanism. The segment at 325 to 706 (YHSPEEEISL…AAPQSLDGVD (382 aa)) is ligase. 355–362 (PLSGGVDS) provides a ligand contact to ATP. Ser357 is a catalytic residue.

In the C-terminal section; belongs to the NAD synthetase family. In terms of assembly, homohexamer.

It catalyses the reaction deamido-NAD(+) + L-glutamine + ATP + H2O = L-glutamate + AMP + diphosphate + NAD(+) + H(+). The protein operates within cofactor biosynthesis; NAD(+) biosynthesis; NAD(+) from deamido-NAD(+) (L-Gln route): step 1/1. In terms of biological role, catalyzes the final step of the nicotinamide adenine dinucleotide (NAD) de novo synthesis pathway, the ATP-dependent amidation of deamido-NAD using L-glutamine as a nitrogen source. The protein is Glutamine-dependent NAD(+) synthetase (NADSYN1) of Macaca fascicularis (Crab-eating macaque).